The sequence spans 247 residues: Small ribosomal subunit protein uS2 (247 aa).

This sequence belongs to the universal ribosomal protein uS2 family.

In Ectopseudomonas mendocina (strain ymp) (Pseudomonas mendocina), this protein is Small ribosomal subunit protein uS2.